The chain runs to 216 residues: MTGCGSCGKIIKNIEKKYYNQLKEKDIVLVGGAVNLDDEEEVKKIMEIRKNSKVLIAVGSCAVSGGFQRMLIGLENGFPQRFVRIGDVVKVDYAIIGCPPDEEEVERIVKAVIEKDKEIVDSYLILKPYEVIAGKPIIDAYMKVNDVLLTSNKELCLGCDDKPINDEFCTGCGTCVAKCPANALTIDEKPKVNISKCIKCGTCFFNCIRVKEALLP.

4Fe-4S ferredoxin-type domains are found at residues 160-189 (DDKP…IDEK) and 188-216 (EKPK…ALLP). The [4Fe-4S] cluster site is built by Cys-169, Cys-172, Cys-175, Cys-179, Cys-197, Cys-200, Cys-203, and Cys-207.

The protein belongs to the FrhG family.

This is an uncharacterized protein from Methanocaldococcus jannaschii (strain ATCC 43067 / DSM 2661 / JAL-1 / JCM 10045 / NBRC 100440) (Methanococcus jannaschii).